The primary structure comprises 231 residues: ATP-dependent dethiobiotin synthetase BioD 2 (231 aa).

Residue 13-18 participates in ATP binding; sequence SVGKTV. Thr17 provides a ligand contact to Mg(2+). Lys38 is an active-site residue. Residues Asp55, 112 to 115, 172 to 173, 201 to 203, and Gln208 contribute to the ATP site; these read EGTG, NR, and PYL. 2 residues coordinate Mg(2+): Asp55 and Glu112.

This sequence belongs to the dethiobiotin synthetase family. Homodimer. It depends on Mg(2+) as a cofactor.

It is found in the cytoplasm. It carries out the reaction (7R,8S)-7,8-diammoniononanoate + CO2 + ATP = (4R,5S)-dethiobiotin + ADP + phosphate + 3 H(+). Its pathway is cofactor biosynthesis; biotin biosynthesis; biotin from 7,8-diaminononanoate: step 1/2. Functionally, catalyzes a mechanistically unusual reaction, the ATP-dependent insertion of CO2 between the N7 and N8 nitrogen atoms of 7,8-diaminopelargonic acid (DAPA, also called 7,8-diammoniononanoate) to form a ureido ring. This Salmonella typhi protein is ATP-dependent dethiobiotin synthetase BioD 2.